A 222-amino-acid polypeptide reads, in one-letter code: Probable GTP-binding protein EngB (222 aa).

The 176-residue stretch at 27–202 (TGIEVAFAGR…AKKLDEWFLG (176 aa)) folds into the EngB-type G domain. Residues 35-42 (GRSNAGKS), 61-65 (GRTQL), 81-84 (DLPG), 148-151 (TKAD), and 181-183 (FSS) each bind GTP. Mg(2+)-binding residues include Ser42 and Thr63.

This sequence belongs to the TRAFAC class TrmE-Era-EngA-EngB-Septin-like GTPase superfamily. EngB GTPase family. Mg(2+) is required as a cofactor.

Its function is as follows. Necessary for normal cell division and for the maintenance of normal septation. This is Probable GTP-binding protein EngB from Pseudoalteromonas translucida (strain TAC 125).